Reading from the N-terminus, the 281-residue chain is Pantothenate synthetase (281 aa).

An ATP-binding site is contributed by Met30–His37. His37 (proton donor) is an active-site residue. A (R)-pantoate-binding site is contributed by Gln61. Residue Gln61 participates in beta-alanine binding. Gly147–Asp150 serves as a coordination point for ATP. Residue Gln153 coordinates (R)-pantoate. Residues Ile176 and Lys184–Arg187 contribute to the ATP site.

The protein belongs to the pantothenate synthetase family. In terms of assembly, homodimer.

It is found in the cytoplasm. The catalysed reaction is (R)-pantoate + beta-alanine + ATP = (R)-pantothenate + AMP + diphosphate + H(+). It functions in the pathway cofactor biosynthesis; (R)-pantothenate biosynthesis; (R)-pantothenate from (R)-pantoate and beta-alanine: step 1/1. In terms of biological role, catalyzes the condensation of pantoate with beta-alanine in an ATP-dependent reaction via a pantoyl-adenylate intermediate. This is Pantothenate synthetase from Clostridium botulinum (strain ATCC 19397 / Type A).